The primary structure comprises 506 residues: GMP synthase [glutamine-hydrolyzing] (506 aa).

The region spanning 4–192 (KLIILDFGSQ…FLDICGMKRD (189 aa)) is the Glutamine amidotransferase type-1 domain. C79 functions as the Nucleophile in the catalytic mechanism. Residues H167 and E169 contribute to the active site. The GMPS ATP-PPase domain occupies 193 to 381 (WTPASFIEAT…LGMMPHLIHR (189 aa)). 220 to 226 (SGGVDSS) lines the ATP pocket.

Homodimer.

The catalysed reaction is XMP + L-glutamine + ATP + H2O = GMP + L-glutamate + AMP + diphosphate + 2 H(+). The protein operates within purine metabolism; GMP biosynthesis; GMP from XMP (L-Gln route): step 1/1. In terms of biological role, catalyzes the synthesis of GMP from XMP. In Porphyromonas gingivalis (strain ATCC 33277 / DSM 20709 / CIP 103683 / JCM 12257 / NCTC 11834 / 2561), this protein is GMP synthase [glutamine-hydrolyzing].